The following is a 262-amino-acid chain: Global transcriptional regulator CodY (262 aa).

The interval 1–159 (MAHLLEKTRK…SSTVVGIQLL (159 aa)) is GAF domain. Positions 207–226 (ASVIADRIGITRSVIVNALR) form a DNA-binding region, H-T-H motif.

It belongs to the CodY family.

It localises to the cytoplasm. Functionally, DNA-binding global transcriptional regulator which is involved in the adaptive response to starvation and acts by directly or indirectly controlling the expression of numerous genes in response to nutrient availability. During rapid exponential growth, CodY is highly active and represses genes whose products allow adaptation to nutrient depletion. The chain is Global transcriptional regulator CodY from Streptococcus gordonii (strain Challis / ATCC 35105 / BCRC 15272 / CH1 / DL1 / V288).